We begin with the raw amino-acid sequence, 150 residues long: Small ribosomal subunit protein uS11 (150 aa).

The tract at residues 126 to 150 is disordered; sequence GRIEDVTPTPSDSTRRKGGRRGRRL. A compositionally biased stretch (basic residues) spans 141 to 150; the sequence is RKGGRRGRRL.

The protein belongs to the universal ribosomal protein uS11 family. In terms of assembly, component of the small ribosomal subunit (SSU). Mature N.crassa ribosomes consist of a small (40S) and a large (60S) subunit. The 40S small subunit contains 1 molecule of ribosomal RNA (18S rRNA) and at least 32 different proteins. The large 60S subunit contains 3 rRNA molecules (26S, 5.8S and 5S rRNA) and at least 42 different proteins.

It localises to the cytoplasm. Its function is as follows. Component of the ribosome, a large ribonucleoprotein complex responsible for the synthesis of proteins in the cell. The small ribosomal subunit (SSU) binds messenger RNAs (mRNAs) and translates the encoded message by selecting cognate aminoacyl-transfer RNA (tRNA) molecules. The large subunit (LSU) contains the ribosomal catalytic site termed the peptidyl transferase center (PTC), which catalyzes the formation of peptide bonds, thereby polymerizing the amino acids delivered by tRNAs into a polypeptide chain. The nascent polypeptides leave the ribosome through a tunnel in the LSU and interact with protein factors that function in enzymatic processing, targeting, and the membrane insertion of nascent chains at the exit of the ribosomal tunnel. uS11 is involved in nucleolar processing of pre-18S ribosomal RNA and ribosome assembly. This is Small ribosomal subunit protein uS11 (rps-14) from Neurospora crassa (strain ATCC 24698 / 74-OR23-1A / CBS 708.71 / DSM 1257 / FGSC 987).